We begin with the raw amino-acid sequence, 287 residues long: Putative ABC transporter ATP-binding protein MM_1038 (287 aa).

Positions 5–238 constitute an ABC transporter domain; sequence LENISVFYSR…ENVPLPPVAS (234 aa). 40–47 lines the ATP pocket; the sequence is GEKGAGKS.

Belongs to the ABC transporter superfamily.

It localises to the cell membrane. Functionally, probably part of an ABC transporter complex. Responsible for energy coupling to the transport system. In Methanosarcina mazei (strain ATCC BAA-159 / DSM 3647 / Goe1 / Go1 / JCM 11833 / OCM 88) (Methanosarcina frisia), this protein is Putative ABC transporter ATP-binding protein MM_1038.